A 449-amino-acid chain; its full sequence is Glutamate--tRNA ligase 2 (449 aa).

The 'HIGH' region motif lies at P17–N27. The 'KMSKS' region motif lies at A248–R252. K251 serves as a coordination point for ATP.

Belongs to the class-I aminoacyl-tRNA synthetase family. Glutamate--tRNA ligase type 1 subfamily. In terms of assembly, monomer.

The protein resides in the cytoplasm. It catalyses the reaction tRNA(Glu) + L-glutamate + ATP = L-glutamyl-tRNA(Glu) + AMP + diphosphate. In terms of biological role, catalyzes the attachment of glutamate to tRNA(Glu) in a two-step reaction: glutamate is first activated by ATP to form Glu-AMP and then transferred to the acceptor end of tRNA(Glu). The sequence is that of Glutamate--tRNA ligase 2 from Jannaschia sp. (strain CCS1).